The chain runs to 144 residues: uncharacterized protein (144 aa).

The segment covering K124–T133 has biased composition (basic residues). The segment at K124–S144 is disordered. The segment covering K134–S144 has biased composition (basic and acidic residues).

This is an uncharacterized protein from Acidianus filamentous virus 1 (isolate United States/Yellowstone) (AFV-1).